We begin with the raw amino-acid sequence, 178 residues long: Cytochrome b6-f complex iron-sulfur subunit (178 aa).

The chain crosses the membrane as a helical span at residues 20-42 (LLTFGTVTGVALGALYPVAQYFT). The region spanning 71–161 (THPVGDRSLV…VSIEDDQVLV (91 aa)) is the Rieske domain. Positions 107, 109, 125, and 128 each coordinate [2Fe-2S] cluster. C112 and C127 are joined by a disulfide.

Belongs to the Rieske iron-sulfur protein family. The 4 large subunits of the cytochrome b6-f complex are cytochrome b6, subunit IV (17 kDa polypeptide, PetD), cytochrome f and the Rieske protein, while the 4 small subunits are PetG, PetL, PetM and PetN. The complex functions as a dimer. The cofactor is [2Fe-2S] cluster.

It is found in the cellular thylakoid membrane. The catalysed reaction is 2 oxidized [plastocyanin] + a plastoquinol + 2 H(+)(in) = 2 reduced [plastocyanin] + a plastoquinone + 4 H(+)(out). Component of the cytochrome b6-f complex, which mediates electron transfer between photosystem II (PSII) and photosystem I (PSI), cyclic electron flow around PSI, and state transitions. The polypeptide is Cytochrome b6-f complex iron-sulfur subunit (Prochlorococcus marinus (strain NATL1A)).